The primary structure comprises 581 residues: Arginine--tRNA ligase (581 aa).

Positions 126–136 (PNLAKEMHVGH) match the 'HIGH' region motif.

This sequence belongs to the class-I aminoacyl-tRNA synthetase family. As to quaternary structure, monomer.

It is found in the cytoplasm. The enzyme catalyses tRNA(Arg) + L-arginine + ATP = L-arginyl-tRNA(Arg) + AMP + diphosphate. The sequence is that of Arginine--tRNA ligase from Shewanella woodyi (strain ATCC 51908 / MS32).